The chain runs to 493 residues: Probable cytochrome P450 313a2 (493 aa).

Cys-438 contacts heme.

The protein belongs to the cytochrome P450 family. Heme is required as a cofactor.

It localises to the endoplasmic reticulum membrane. The protein localises to the microsome membrane. Its function is as follows. May be involved in the metabolism of insect hormones and in the breakdown of synthetic insecticides. The sequence is that of Probable cytochrome P450 313a2 (Cyp313a2) from Drosophila melanogaster (Fruit fly).